The following is a 359-amino-acid chain: 3-dehydroquinate synthase (359 aa).

Residues 69-74, 103-107, 127-128, K140, and K149 contribute to the NAD(+) site; these read DAEDGK, GAVTD, and TT. Residues E182, H244, and H260 each coordinate Zn(2+).

It belongs to the sugar phosphate cyclases superfamily. Dehydroquinate synthase family. The cofactor is NAD(+). Co(2+) is required as a cofactor. It depends on Zn(2+) as a cofactor.

The protein localises to the cytoplasm. It carries out the reaction 7-phospho-2-dehydro-3-deoxy-D-arabino-heptonate = 3-dehydroquinate + phosphate. The protein operates within metabolic intermediate biosynthesis; chorismate biosynthesis; chorismate from D-erythrose 4-phosphate and phosphoenolpyruvate: step 2/7. Functionally, catalyzes the conversion of 3-deoxy-D-arabino-heptulosonate 7-phosphate (DAHP) to dehydroquinate (DHQ). The chain is 3-dehydroquinate synthase from Corynebacterium pseudotuberculosis (strain C231).